The following is a 450-amino-acid chain: UDP-N-acetylmuramoylalanine--D-glutamate ligase (450 aa).

Residue 119–125 (GSNGKTT) participates in ATP binding.

The protein belongs to the MurCDEF family.

Its subcellular location is the cytoplasm. It catalyses the reaction UDP-N-acetyl-alpha-D-muramoyl-L-alanine + D-glutamate + ATP = UDP-N-acetyl-alpha-D-muramoyl-L-alanyl-D-glutamate + ADP + phosphate + H(+). Its pathway is cell wall biogenesis; peptidoglycan biosynthesis. Its function is as follows. Cell wall formation. Catalyzes the addition of glutamate to the nucleotide precursor UDP-N-acetylmuramoyl-L-alanine (UMA). The polypeptide is UDP-N-acetylmuramoylalanine--D-glutamate ligase (Bacillus mycoides (strain KBAB4) (Bacillus weihenstephanensis)).